A 397-amino-acid chain; its full sequence is ORC1-type DNA replication protein 8 (397 aa).

Residues 61–65 (VGKTA), tyrosine 211, and arginine 223 contribute to the ATP site.

This sequence belongs to the CDC6/cdc18 family.

Its function is as follows. Involved in regulation of DNA replication. This is ORC1-type DNA replication protein 8 (orc8) from Halobacterium salinarum (strain ATCC 700922 / JCM 11081 / NRC-1) (Halobacterium halobium).